A 770-amino-acid chain; its full sequence is Protein PAT1 homolog 1 (770 aa).

The disordered stretch occupies residues 1 to 26 (MFRYESLEDCPLDEDEDAFQGLGEED). Positions 1 to 84 (MFRYESLEDC…EMDLLGDHEE (84 aa)) are region A; interaction with DDX6/RCK. The interval 1 to 397 (MFRYESLEDC…HRSSHQDHLR (397 aa)) is involved in nuclear foci localization. Residues 7 to 26 (LEDCPLDEDEDAFQGLGEED) are compositionally biased toward acidic residues. The tract at residues 85 to 388 (NLAERLSKMV…LNGAGDRGSH (304 aa)) is region N; interaction with decapping machinery. The Nuclear export signal signature appears at 86–95 (LAERLSKMVI). A Phosphoserine modification is found at Ser-177. The residue at position 178 (Thr-178) is a Phosphothreonine. Phosphoserine occurs at positions 179 and 184. At Thr-194 the chain carries Phosphothreonine. Asymmetric dimethylarginine is present on residues Arg-217, Arg-223, and Arg-263. Residues 223–397 (RYPAPYGERM…HRSSHQDHLR (175 aa)) are involved in RNA-binding. A Phosphoserine modification is found at Ser-278. Arg-284 is modified (asymmetric dimethylarginine). 2 disordered regions span residues 315 to 344 (FRAF…QNLR) and 360 to 400 (QHRR…RKDP). Pro residues predominate over residues 324-337 (SATPPPQQHPPGPG). Positions 367–380 (QRQQQNRNQHRNLN) are enriched in low complexity. Omega-N-methylarginine is present on Arg-385. A compositionally biased stretch (basic and acidic residues) spans 385–400 (RGSHRSSHQDHLRKDP). Residues 389 to 448 (RSSHQDHLRKDPYANLMLQREKDWVSKIQMMQLQSTDPYLDDFYYQNYFEKLEKLSAAEE) form a region H region. An involved in nuclear speckle localization region spans residues 398–770 (KDPYANLMLQ…TKLQLVQGIR (373 aa)). Residues 449–770 (IQGDGPKKER…TKLQLVQGIR (322 aa)) are region C.

The protein belongs to the PAT1 family. Interacts (via region A) with DDX6/RCK. Interacts (via region H and region C) with LSM1 and LSM4. Interacts (via region N) with DCP1A, DCP2, EDC3, EDC4 and XRN1. Interacts with the CCR4-NOT complex. Interacts with the Lsm-containing SMN-Sm protein complex. Interacts with EIF4ENIF1/4E-T.

The protein resides in the cytoplasm. It localises to the P-body. The protein localises to the nucleus. It is found in the PML body. Its subcellular location is the nucleus speckle. In terms of biological role, RNA-binding protein involved in deadenylation-dependent decapping of mRNAs, leading to the degradation of mRNAs. Acts as a scaffold protein that connects deadenylation and decapping machinery. Required for cytoplasmic mRNA processing body (P-body) assembly. The sequence is that of Protein PAT1 homolog 1 (PATL1) from Pongo abelii (Sumatran orangutan).